Consider the following 282-residue polypeptide: MALLSFERKYRVPGGTLVGGNLFDFWVGPFYVGFFGVATFFFAALGIILIAWSAVLQGTWNPQLISVYPPALEYGLGGAPLAKGGLWQIITICATGAFVSWALREVEICRKLGIGYHIPFAFAFAILAYLTLVLFRPVMMGAWGYAFPYGIWTHLDWVSNTGYTYGNFHYNPAHMIAISFFFTNALALALHGALVLSAANPEKGKEMRTPDHEDTFFRDLVGYSIGTLGIHRLGLLLSLSAVFFSALCMIITGTIWFDQWVDWWQWWVKLPWWANIPGGING.

Residues 2-32 (ALLSFERKYRVPGGTLVGGNLFDFWVGPFYV) are Cytoplasmic-facing. A helical membrane pass occupies residues 33–56 (GFFGVATFFFAALGIILIAWSAVL). The Periplasmic segment spans residues 57-83 (QGTWNPQLISVYPPALEYGLGGAPLAK). Residues 84–112 (GGLWQIITICATGAFVSWALREVEICRKL) form a helical membrane-spanning segment. The Cytoplasmic portion of the chain corresponds to 113–116 (GIGY). The chain crosses the membrane as a helical span at residues 117 to 139 (HIPFAFAFAILAYLTLVLFRPVM). Residues 140 to 171 (MGAWGYAFPYGIWTHLDWVSNTGYTYGNFHYN) are Periplasmic-facing. 2 residues coordinate (7R,8Z)-bacteriochlorophyll b: H154 and H174. Residues 172-199 (PAHMIAISFFFTNALALALHGALVLSAA) form a helical membrane-spanning segment. H191 is a binding site for Fe cation. The Cytoplasmic segment spans residues 200-225 (NPEKGKEMRTPDHEDTFFRDLVGYSI). F217 provides a ligand contact to a ubiquinone. The helical transmembrane segment at 226–251 (GTLGIHRLGLLLSLSAVFFSALCMII) threads the bilayer. H231 contacts Fe cation. The Periplasmic segment spans residues 252–282 (TGTIWFDQWVDWWQWWVKLPWWANIPGGING).

The protein belongs to the reaction center PufL/M/PsbA/D family. As to quaternary structure, reaction center is composed of four bacteriochlorophylls, two bacteriopheophytins, two ubiquinones, one iron, and three highly hydrophobic polypeptide chains (designated L, M, and H).

Its subcellular location is the cellular chromatophore membrane. Its function is as follows. The reaction center is a membrane-bound complex that mediates the initial photochemical event in the electron transfer process of photosynthesis. In Cereibacter sphaeroides (strain ATCC 17023 / DSM 158 / JCM 6121 / CCUG 31486 / LMG 2827 / NBRC 12203 / NCIMB 8253 / ATH 2.4.1.) (Rhodobacter sphaeroides), this protein is Reaction center protein L chain (pufL).